We begin with the raw amino-acid sequence, 607 residues long: MPRKKPFSVKQKKKQLQDKRERKRGLQDGLRSSSNSRSGSRERREEQTDTSDGESVTHHIRRLNQQPSQGLGPRGYDPNRYRLHFERDSREEVERRKRAAREQVLQPVSAEVLELDIREVYQPGSVLDFPRRPPWSYEMSKEQLMSQEERSFQEYLGKIHGAYSSEKLSYFEHNLETWRQLWRVLEMSDIVLLITDIRHPVVNFPPALYEYVTGELGLALVLVLNKVDLAPPALVVAWKHYFHQHYPQLHVVLFTSFPRDPRTPQDPSSVLKKSRRRGRGWTRALGPEQLLRACEAITVGKVDLSSWREKIARDVAGATWGNGSGEEEEEEDGPAVLVEQQTDSAMEPTGPTRERYKDGVVTIGCVGFPNVGKSSLINGLVGRKVVSVSRTPGHTRYFQTYFLTPSVKLCDCPGLIFPSLLPRQLQVLAGIYPIAQIQEPYTAVGYLASRIPVQALLHLRHPEAEDPSAEHPWCAWDICEAWAEKRGYKTAKAARNDVYRAANSLLRLAVDGRLSLCFHPPGYSEQKGTWESHPETTELVVLQGRVGPAGDEEEEEEEELSSSCEEEGEEDRDADEEGEGDEDTPTSAPGSSLAGRNPYALLGEDEC.

Basic residues predominate over residues 1-14 (MPRKKPFSVKQKKK). The segment at 1–81 (MPRKKPFSVK…GPRGYDPNRY (81 aa)) is disordered. The span at 15–26 (QLQDKRERKRGL) shows a compositional bias: basic and acidic residues. Phosphoserine occurs at positions 32, 33, and 34. Residues T48 and T50 each carry the phosphothreonine modification. A phosphoserine mark is found at S51 and S68. A CP-type G domain is found at 178 to 418 (WRQLWRVLEM…LCDCPGLIFP (241 aa)). 225-228 (NKVD) provides a ligand contact to GTP. S324 carries the post-translational modification Phosphoserine. Residues 367–374 (GFPNVGKS) and 411–415 (DCPGL) each bind GTP. Positions 547–607 (GPAGDEEEEE…PYALLGEDEC (61 aa)) are disordered. Residues 550–584 (GDEEEEEEEELSSSCEEEGEEDRDADEEGEGDEDT) show a composition bias toward acidic residues. S561, S562, and S563 each carry phosphoserine.

This sequence belongs to the TRAFAC class YlqF/YawG GTPase family.

In terms of biological role, possible regulatory or functional link with the histocompatibility cluster. This is Guanine nucleotide-binding protein-like 1 (GNL1) from Pongo abelii (Sumatran orangutan).